Here is a 382-residue protein sequence, read N- to C-terminus: Draxin-A (382 aa).

The first 22 residues, 1–22 (MMSSSWCLPLALLFSTLAVSHS), serve as a signal peptide directing secretion. Disordered regions lie at residues 28-213 (THAK…PPSP), 233-252 (LPTLPPASTKPQKSGRGKMQ), and 275-297 (VDAWPSSRKKDKRRSKNLSSGNV). A compositionally biased stretch (low complexity) spans 73–82 (RGAKASSGAG). Positions 139-149 (GPRKGRGQGHG) are enriched in basic residues. The segment covering 190–201 (SVSSAAAATSPS) has biased composition (low complexity). Residues 281 to 290 (SRKKDKRRSK) are compositionally biased toward basic residues. Asn-291 and Asn-296 each carry an N-linked (GlcNAc...) asparagine glycan.

Belongs to the draxin family.

It localises to the secreted. Its function is as follows. Chemorepulsive axon guidance protein required for the development of spinal cord and forebrain commissures. Acts as a chemorepulsive guidance protein for commissural axons during development. Able to inhibit or repel neurite outgrowth from dorsal spinal cord. This chain is Draxin-A (draxin-A), found in Salmo salar (Atlantic salmon).